The primary structure comprises 454 residues: Nucleoprotein (454 aa).

Residues Met1–Val62 form a disordered region. The segment covering Ala10 to Gly23 has biased composition (low complexity). Polar residues predominate over residues Lys50–Ser61. The interval Gln56–Ser197 is RNA-binding. The region spanning Pro64–Gly193 is the CoV N NTD domain. RNA contacts are provided by Arg109 and Arg125. Disordered stretches follow at residues Thr160–Phe179, Pro186–Lys230, Pro271–Pro292, and Asp382–Thr428. A Phosphoserine; by host modification is found at Ser162. Position 167 (Arg167) interacts with RNA. Residue Ser170 is modified to Phosphoserine; by host. A Phosphothreonine; by host modification is found at Thr177. Positions Gly193–Pro212 are enriched in low complexity. Ser194 carries the phosphoserine; by host modification. Over residues Arg215–Ser227 the composition is skewed to polar residues. One can recognise a CoV N CTD domain in the interval Ala260–Gly383. Residues Ile267 to Gly383 form a dimerization region. 2 positions are modified to phosphoserine; by host: Ser389 and Ser424. Residue Thr428 is modified to Phosphothreonine; by host.

It belongs to the betacoronavirus nucleocapsid protein family. Homooligomer. Both monomeric and oligomeric forms interact with RNA. Interacts with protein M. Interacts with NSP3; this interaction serves to tether the genome to the newly translated replicase-transcriptase complex at a very early stage of infection. ADP-ribosylated. The ADP-ribosylation is retained in the virion during infection. Post-translationally, phosphorylated on serine and threonine residues.

The protein resides in the virion. The protein localises to the host endoplasmic reticulum-Golgi intermediate compartment. It is found in the host Golgi apparatus. Major structural component of virions that associates with genomic RNA to form a long, flexible, helical nucleocapsid. Interaction with the M protein leads to the formation of virus particles. Binds to cellular membranes and phospholipids. Elicits cell-mediated immunity. May play roles in viral transcription and translation, and/or replication. Induces transcription of the prothrombinase (FGL2) and elevates procoagulant activity. In terms of biological role, packages the positive strand viral genome RNA into a helical ribonucleocapsid (RNP) and plays a fundamental role during virion assembly through its interactions with the viral genome and membrane protein M. Plays an important role in enhancing the efficiency of subgenomic viral RNA transcription as well as viral replication. This chain is Nucleoprotein, found in Mus musculus (Mouse).